The chain runs to 217 residues: Probable cytidylate kinase (217 aa).

9–17 (GPAGSGKST) serves as a coordination point for ATP.

It belongs to the cytidylate kinase family. Type 1 subfamily.

The enzyme catalyses CMP + ATP = CDP + ADP. The catalysed reaction is dCMP + ATP = dCDP + ADP. This chain is Probable cytidylate kinase, found in Vairimorpha ceranae (strain BRL01) (Microsporidian parasite).